The following is a 354-amino-acid chain: Tetraacyldisaccharide 4'-kinase (354 aa).

53 to 60 (AWGGTGKT) is an ATP binding site.

It belongs to the LpxK family.

The enzyme catalyses a lipid A disaccharide + ATP = a lipid IVA + ADP + H(+). Its pathway is glycolipid biosynthesis; lipid IV(A) biosynthesis; lipid IV(A) from (3R)-3-hydroxytetradecanoyl-[acyl-carrier-protein] and UDP-N-acetyl-alpha-D-glucosamine: step 6/6. Functionally, transfers the gamma-phosphate of ATP to the 4'-position of a tetraacyldisaccharide 1-phosphate intermediate (termed DS-1-P) to form tetraacyldisaccharide 1,4'-bis-phosphate (lipid IVA). This is Tetraacyldisaccharide 4'-kinase from Nitratidesulfovibrio vulgaris (strain ATCC 29579 / DSM 644 / CCUG 34227 / NCIMB 8303 / VKM B-1760 / Hildenborough) (Desulfovibrio vulgaris).